Here is a 426-residue protein sequence, read N- to C-terminus: MSKSEQLFEKAQKVIPGGVNSPVRAFKGVGGTPVFIQKAEGAYITDSDGKKYIDYVGSWGPMVLGHNHPAIIDAVLKAVPNGLSFGAPTESEITLAELVTKLVPSIELVRMVSSGTEATMSAIRLARGYTGRDKIIKFEGCYHGHSDSLLVKAGSGALTLGQPSGPGVPADFAKHTLTCTYNDLDSVKTAFEQYPNEIACLIVEPVAGNMNCIPPKNDFLKGLRALCDQYGAVFIIDEVMTGFRVALGGAQAYYDVKPDLTTLGKIIGGGMPVGAFGGKKEIMEYIAPTGPVYQAGTLSGNPIAMAAGLACLTELSKAGNEEKLAAQTKTLAEGFKALADKHNVLFTAQYVGGMFGLFFTEQAEITNFQEVMKCDAAKFNRFFHLMLEQGVYLAPSAFEAGFMSLAHSDEDIQATLAAADKAFAQL.

Position 265 is an N6-(pyridoxal phosphate)lysine (lysine 265).

Belongs to the class-III pyridoxal-phosphate-dependent aminotransferase family. HemL subfamily. In terms of assembly, homodimer. Pyridoxal 5'-phosphate is required as a cofactor.

It localises to the cytoplasm. The catalysed reaction is (S)-4-amino-5-oxopentanoate = 5-aminolevulinate. It functions in the pathway porphyrin-containing compound metabolism; protoporphyrin-IX biosynthesis; 5-aminolevulinate from L-glutamyl-tRNA(Glu): step 2/2. This chain is Glutamate-1-semialdehyde 2,1-aminomutase, found in Actinobacillus pleuropneumoniae serotype 5b (strain L20).